Here is a 571-residue protein sequence, read N- to C-terminus: Proline--tRNA ligase (571 aa).

Belongs to the class-II aminoacyl-tRNA synthetase family. ProS type 1 subfamily. As to quaternary structure, homodimer.

It is found in the cytoplasm. It carries out the reaction tRNA(Pro) + L-proline + ATP = L-prolyl-tRNA(Pro) + AMP + diphosphate. Catalyzes the attachment of proline to tRNA(Pro) in a two-step reaction: proline is first activated by ATP to form Pro-AMP and then transferred to the acceptor end of tRNA(Pro). As ProRS can inadvertently accommodate and process non-cognate amino acids such as alanine and cysteine, to avoid such errors it has two additional distinct editing activities against alanine. One activity is designated as 'pretransfer' editing and involves the tRNA(Pro)-independent hydrolysis of activated Ala-AMP. The other activity is designated 'posttransfer' editing and involves deacylation of mischarged Ala-tRNA(Pro). The misacylated Cys-tRNA(Pro) is not edited by ProRS. This Buchnera aphidicola subsp. Schizaphis graminum (strain Sg) protein is Proline--tRNA ligase.